A 719-amino-acid chain; its full sequence is Potassium-transporting ATPase ATP-binding subunit (719 aa).

4 helical membrane-spanning segments follow: residues 35–55, 62–82, 228–248, and 254–274; these read LFVV…PGLF, VYYA…NYAE, ILLS…FFFG, and FVGG…VALM. D318 (4-aspartylphosphate intermediate) is an active-site residue. D355 and E359 together coordinate ATP. The interval 372–396 is disordered; the sequence is GKVQTDGGQSASEELDEPGDSVDAP. Residues 373–383 show a composition bias toward polar residues; that stretch reads KVQTDGGQSAS. ATP is bound by residues 416–423 and K435; that span reads FSAETRMS. Residues D554 and D558 each contribute to the Mg(2+) site. The next 3 helical transmembrane spans lie at 624 to 644, 652 to 672, and 698 to 718; these read FVLL…MDIL, AVTA…PLAL, and LIAP…LGVF.

It belongs to the cation transport ATPase (P-type) (TC 3.A.3) family. Type IA subfamily. As to quaternary structure, the system is composed of three essential subunits: KdpA, KdpB and KdpC. The complex also contains KdpF, a small non-essential subunit.

Its subcellular location is the cell membrane. The enzyme catalyses K(+)(out) + ATP + H2O = K(+)(in) + ADP + phosphate + H(+). Its function is as follows. Part of the high-affinity ATP-driven potassium transport (or Kdp) system, which catalyzes the hydrolysis of ATP coupled with the electrogenic transport of potassium into the cytoplasm. This subunit is responsible for energy coupling to the transport system and for the release of the potassium ions to the cytoplasm. The Kdp system is essential for growth under K(+) limitation, and for survival under desiccation and salt crystal inclusion. The chain is Potassium-transporting ATPase ATP-binding subunit from Halobacterium salinarum (strain ATCC 29341 / DSM 671 / R1).